The primary structure comprises 506 residues: UBX domain-containing protein 4 (506 aa).

The segment at 1–199 (MLWFQGAIPA…PAEDLTVRVE (199 aa)) is interaction with UBQLN1. Over 1–411 (MLWFQGAIPA…VHSSSGDIWT (411 aa)) the chain is Cytoplasmic. Positions 110 to 194 (QQMHSSKGEA…CSNQRPAEDL (85 aa)) are disordered. Composition is skewed to polar residues over residues 120-136 (SVTNDNQSESSVSTPSA) and 153-167 (LCETPATSDIKSDTA). The UBX domain occupies 313-391 (DRSTIARIQF…ELAPSASVVL (79 aa)). An intramembrane segment occupies 412 to 432 (LLGTVLYPFLAIWRLISNFLF). Topologically, residues 433-506 (SNPPPAQTSA…TWNGNSTQQM (74 aa)) are cytoplasmic. Residues 437–506 (PAQTSARATS…TWNGNSTQQM (70 aa)) are disordered. A compositionally biased stretch (low complexity) spans 444–456 (ATSTEPSNSASSS). Basic and acidic residues predominate over residues 457–489 (KSEKREPVRKRMLEKRGEDFKKEGKIYRLRTQD). T487 bears the Phosphothreonine mark. Residues 496 to 506 (NTWNGNSTQQM) are compositionally biased toward polar residues.

In terms of assembly, directly interacts with VCP. Interacts with UBQLN1. Forms a complex with VCP and UBQLN1. In terms of tissue distribution, expressed in many tissues, including brain, heart, kidney, liver, muscle and spleen (at protein level).

It localises to the endoplasmic reticulum membrane. Its subcellular location is the nucleus envelope. Involved in endoplasmic reticulum-associated protein degradation (ERAD). Acts as a platform to recruit both UBQLN1 and VCP to the ER during ERAD. This Mus musculus (Mouse) protein is UBX domain-containing protein 4 (Ubxn4).